A 345-amino-acid chain; its full sequence is GTP cyclohydrolase-2 (345 aa).

The segment at 1–27 is disordered; the sequence is MTIDNYDNSKQDSSKYEVSGTGDGRNG. Position 143-147 (143-147) interacts with GTP; that stretch reads RIHSE. Cys148, Cys159, and Cys161 together coordinate Zn(2+). GTP contacts are provided by residues Gln164, 197–199, and Thr219; that span reads EGR. Residue Asp231 is the Proton acceptor of the active site. Arg233 (nucleophile) is an active-site residue. GTP is bound by residues Thr254 and Lys259. Residues 312-345 form a disordered region; the sequence is PLKLHTNPQPTETSEAQNQNRMNSALSSTSTLAI. Residues 317–345 are compositionally biased toward polar residues; that stretch reads TNPQPTETSEAQNQNRMNSALSSTSTLAI.

Belongs to the GTP cyclohydrolase II family. Zn(2+) serves as cofactor.

It catalyses the reaction GTP + 4 H2O = 2,5-diamino-6-hydroxy-4-(5-phosphoribosylamino)-pyrimidine + formate + 2 phosphate + 3 H(+). Its pathway is cofactor biosynthesis; riboflavin biosynthesis; 5-amino-6-(D-ribitylamino)uracil from GTP: step 1/4. In terms of biological role, catalyzes the conversion of GTP to 2,5-diamino-6-ribosylamino-4(3H)-pyrimidinone 5'-phosphate (DARP), formate and pyrophosphate. The chain is GTP cyclohydrolase-2 (RIB1) from Saccharomyces cerevisiae (strain ATCC 204508 / S288c) (Baker's yeast).